A 173-amino-acid chain; its full sequence is Ribosomal RNA large subunit methyltransferase H (173 aa).

The S-adenosyl-L-methionine site is built by Leu-89 and Gly-121.

This sequence belongs to the RNA methyltransferase RlmH family. Homodimer.

The protein localises to the cytoplasm. The catalysed reaction is pseudouridine(1915) in 23S rRNA + S-adenosyl-L-methionine = N(3)-methylpseudouridine(1915) in 23S rRNA + S-adenosyl-L-homocysteine + H(+). Its function is as follows. Specifically methylates the pseudouridine at position 1915 (m3Psi1915) in 23S rRNA. The sequence is that of Ribosomal RNA large subunit methyltransferase H from Chelativorans sp. (strain BNC1).